A 515-amino-acid polypeptide reads, in one-letter code: Probable malate:quinone oxidoreductase (515 aa).

Belongs to the MQO family. FAD is required as a cofactor.

The catalysed reaction is (S)-malate + a quinone = a quinol + oxaloacetate. Its pathway is carbohydrate metabolism; tricarboxylic acid cycle; oxaloacetate from (S)-malate (quinone route): step 1/1. This Blochmanniella pennsylvanica (strain BPEN) protein is Probable malate:quinone oxidoreductase.